The primary structure comprises 674 residues: Tripartite terminase subunit 3 (674 aa).

Positions 212-219 (VPRRHGKT) match the Walker A motif motif. The Walker B motif motif lies at 305-310 (LLLVDE). Residue Glu310 is the For ATPase activity of the active site. Active-site for nuclease activity residues include Asp463, Glu534, and Asp651.

Belongs to the herpesviridae TRM3 protein family. In terms of assembly, interacts with the terminase subunits TRM1 and TRM2. Interacts with portal protein.

The protein resides in the host nucleus. In terms of biological role, component of the molecular motor that translocates viral genomic DNA in empty capsid during DNA packaging. Forms a tripartite terminase complex together with TRM1 and TRM2 in the host cytoplasm. Once the complex reaches the host nucleus, it interacts with the capsid portal vertex. This portal forms a ring in which genomic DNA is translocated into the capsid. TRM3 carries an RNase H-like nuclease activity that plays an important role for the cleavage of concatemeric viral DNA into unit length genomes. The sequence is that of Tripartite terminase subunit 3 from Homo sapiens (Human).